The primary structure comprises 595 residues: P2X purinoceptor 7 (595 aa).

At 1 to 22 the chain is on the cytoplasmic side; it reads MPACCSWNDVLQYETNKVTRIQ. A lipid anchor (S-palmitoyl cysteine) is attached at Cys4. A helical transmembrane segment spans residues 23–46; that stretch reads STNYGTVKWVLHMIVFSYISFALV. Topologically, residues 47–328 are extracellular; the sequence is SDKLYQRKEP…ILVFGTGGKF (282 aa). N-linked (GlcNAc...) asparagine glycosylation is present at Asn74. 3 disulfide bridges follow: Cys119–Cys168, Cys129–Cys152, and Cys135–Cys162. An ADP-ribosylarginine; by ART2B mark is found at Arg125 and Arg133. Residue Asn187 is glycosylated (N-linked (GlcNAc...) asparagine). Thr189 contributes to the ATP binding site. Asn202 and Asn213 each carry an N-linked (GlcNAc...) asparagine glycan. An intrachain disulfide couples Cys216 to Cys226. Asn241 carries N-linked (GlcNAc...) asparagine glycosylation. A disulfide bridge connects residues Cys260 and Cys269. Residues Arg294 and Lys311 each coordinate ATP. The helical transmembrane segment at 329-353 threads the bilayer; it reads DIIQLVVYIGSTLSYFGLATVCIDL. Ser342 lines the Na(+) pocket. Topologically, residues 354–595 are cytoplasmic; it reads LINTYSSAFC…GQYSGFKYPY (242 aa). The segment at 360-377 is C-cys anchor; sequence SAFCRSGVYPYCKCCEPC. 3 S-palmitoyl cysteine lipidation sites follow: Cys363, Cys374, and Cys377. Position 390 is a phosphoserine (Ser390). Positions 395–595 are cytoplasmic ballast; that stretch reads KPTLKYVSFV…GQYSGFKYPY (201 aa). Positions 479, 499, and 506 each coordinate Zn(2+). GTP-binding residues include Arg546, His547, Tyr550, and Ala567. Cys572 is a Zn(2+) binding site. Lys583, Ser589, and Gly590 together coordinate GTP.

Belongs to the P2X receptor family. In terms of assembly, homotrimers. Interacts with LAMA3, ITGB2, ACTB, ACTN4, SVIL, MPP3, HSPA1, HSPCB, HSPA8, PIK230 and PTPRB. Interacts (via C-terminus) with EMP2. Post-translationally, phosphorylation results in its inactivation. ADP-ribosylation at Arg-125 is necessary and sufficient to activate P2RX7 and gate the channel. In terms of processing, palmitoylation of several cysteines in the C-terminal cytoplasmic tail is required for efficient localization to cell surface. Palmitoylation prevents channel desensitization by physically anchoring the palmitoylated groups to the membrane.

It is found in the cell membrane. It catalyses the reaction Ca(2+)(in) = Ca(2+)(out). It carries out the reaction K(+)(in) = K(+)(out). The catalysed reaction is Na(+)(in) = Na(+)(out). Activated by high extracellular ATP levels (0.1-2.5 mM). The synthetic analog 2'(3')-O-(4-benzoylbenzoyl)ATP (BzATP) acts as a potent agonist. Does not undergo desensitization, instead, undergoes a facilitation process where currents progressively increase with repetitive or prolonged agonist application. Palmitoylation prevents channel desensitization. The permeability of the P2RX7 channel is modulated by the amount of cholesterol in the plasma membrane. ATP-gated nonselective transmembrane cation channel. Requires high millimolar-range concentrations of ATP to become activated. ATP binding trigers the rapid opening of the channel and allows Na(+) and Ca(2+) influx and K(+) efflux. Has also the ability to form a large pore in the cell membrane, allowing the passage of large cationic molecules. In microglia, may mediate NADPH transport across the plasma membrane. In immune cells, P2RX7 acts as a molecular sensor in pathological inflammatory states by detecting and responding to high local concentrations of extracellar ATP. In microglial cells, P2RX7 activation leads to the release of pro-inflammatory cytokines, such as IL-1beta and IL-18, through the activation of the NLRP3 inflammasome and caspase-1. Cooperates with KCNK6 to activate NLRP3 inflammasome. Activates death pathways leading to apoptosis and autophagy. Activates death pathways leading to pyroptosis. This Mus musculus (Mouse) protein is P2X purinoceptor 7 (P2rx7).